The following is a 242-amino-acid chain: Phosphoribosylaminoimidazole-succinocarboxamide synthase (242 aa).

This sequence belongs to the SAICAR synthetase family.

The catalysed reaction is 5-amino-1-(5-phospho-D-ribosyl)imidazole-4-carboxylate + L-aspartate + ATP = (2S)-2-[5-amino-1-(5-phospho-beta-D-ribosyl)imidazole-4-carboxamido]succinate + ADP + phosphate + 2 H(+). It participates in purine metabolism; IMP biosynthesis via de novo pathway; 5-amino-1-(5-phospho-D-ribosyl)imidazole-4-carboxamide from 5-amino-1-(5-phospho-D-ribosyl)imidazole-4-carboxylate: step 1/2. The chain is Phosphoribosylaminoimidazole-succinocarboxamide synthase from Trichodesmium erythraeum (strain IMS101).